The sequence spans 280 residues: Energy-coupling factor transporter ATP-binding protein EcfA1 (280 aa).

Residues 7 to 241 (IEVAHLKYEY…GQRLLDLGLD (235 aa)) enclose the ABC transporter domain. 41-48 (GHNGSGKS) is a binding site for ATP.

This sequence belongs to the ABC transporter superfamily. Energy-coupling factor EcfA family. As to quaternary structure, forms a stable energy-coupling factor (ECF) transporter complex composed of 2 membrane-embedded substrate-binding proteins (S component), 2 ATP-binding proteins (A component) and 2 transmembrane proteins (T component).

It is found in the cell membrane. Its function is as follows. ATP-binding (A) component of a common energy-coupling factor (ECF) ABC-transporter complex. Unlike classic ABC transporters this ECF transporter provides the energy necessary to transport a number of different substrates. The chain is Energy-coupling factor transporter ATP-binding protein EcfA1 from Latilactobacillus sakei subsp. sakei (strain 23K) (Lactobacillus sakei subsp. sakei).